A 310-amino-acid polypeptide reads, in one-letter code: Probable manganese-dependent inorganic pyrophosphatase (310 aa).

His9, Asp13, Asp15, Asp76, His98, and Asp150 together coordinate Mn(2+).

Belongs to the PPase class C family. As to quaternary structure, homodimer. Mn(2+) serves as cofactor.

It localises to the cytoplasm. The catalysed reaction is diphosphate + H2O = 2 phosphate + H(+). In Streptococcus mutans serotype c (strain ATCC 700610 / UA159), this protein is Probable manganese-dependent inorganic pyrophosphatase (ppaC).